The primary structure comprises 349 residues: Protein RecA (349 aa).

Position 64 to 71 (64 to 71 (GPESSGKT)) interacts with ATP.

Belongs to the RecA family.

It localises to the cytoplasm. Can catalyze the hydrolysis of ATP in the presence of single-stranded DNA, the ATP-dependent uptake of single-stranded DNA by duplex DNA, and the ATP-dependent hybridization of homologous single-stranded DNAs. It interacts with LexA causing its activation and leading to its autocatalytic cleavage. The sequence is that of Protein RecA from Rhodopseudomonas palustris (strain ATCC BAA-98 / CGA009).